Reading from the N-terminus, the 435-residue chain is Glutamyl-tRNA reductase (435 aa).

Substrate-binding positions include 49–52, Ser-118, 123–125, and Gln-129; these read TCNR and EPQ. The active-site Nucleophile is Cys-50. 203 to 208 provides a ligand contact to NADP(+); the sequence is GAGETI.

The protein belongs to the glutamyl-tRNA reductase family. As to quaternary structure, homodimer.

The catalysed reaction is (S)-4-amino-5-oxopentanoate + tRNA(Glu) + NADP(+) = L-glutamyl-tRNA(Glu) + NADPH + H(+). It functions in the pathway porphyrin-containing compound metabolism; protoporphyrin-IX biosynthesis; 5-aminolevulinate from L-glutamyl-tRNA(Glu): step 1/2. In terms of biological role, catalyzes the NADPH-dependent reduction of glutamyl-tRNA(Glu) to glutamate 1-semialdehyde (GSA). This is Glutamyl-tRNA reductase from Glaesserella parasuis serovar 5 (strain SH0165) (Haemophilus parasuis).